The sequence spans 248 residues: DNA repair protein RecO (248 aa).

It belongs to the RecO family.

In terms of biological role, involved in DNA repair and RecF pathway recombination. This chain is DNA repair protein RecO, found in Streptomyces avermitilis (strain ATCC 31267 / DSM 46492 / JCM 5070 / NBRC 14893 / NCIMB 12804 / NRRL 8165 / MA-4680).